A 206-amino-acid chain; its full sequence is Protein GrpE (206 aa).

The protein belongs to the GrpE family. As to quaternary structure, homodimer.

The protein resides in the cytoplasm. Functionally, participates actively in the response to hyperosmotic and heat shock by preventing the aggregation of stress-denatured proteins, in association with DnaK and GrpE. It is the nucleotide exchange factor for DnaK and may function as a thermosensor. Unfolded proteins bind initially to DnaJ; upon interaction with the DnaJ-bound protein, DnaK hydrolyzes its bound ATP, resulting in the formation of a stable complex. GrpE releases ADP from DnaK; ATP binding to DnaK triggers the release of the substrate protein, thus completing the reaction cycle. Several rounds of ATP-dependent interactions between DnaJ, DnaK and GrpE are required for fully efficient folding. The chain is Protein GrpE from Shewanella sp. (strain W3-18-1).